Consider the following 464-residue polypeptide: Probable acid phosphatase DDB_G0284753 (464 aa).

The segment at 1–29 (MFSYFRKSQQKVEENQNGGGGDGRGSGIK) is disordered. Gly residues predominate over residues 17-26 (NGGGGDGRGS). The active-site Nucleophile is histidine 81. A disordered region spans residues 180 to 202 (SFTDEQEKSPHHSSFLVKPDNEE). Aspartate 347 serves as the catalytic Proton donor.

The protein belongs to the histidine acid phosphatase family.

The catalysed reaction is a phosphate monoester + H2O = an alcohol + phosphate. The chain is Probable acid phosphatase DDB_G0284753 from Dictyostelium discoideum (Social amoeba).